Reading from the N-terminus, the 232-residue chain is Ribose-5-phosphate isomerase A (232 aa).

Substrate-binding positions include 28–31 (TGST), 83–86 (DGAD), and 96–99 (KGGG). Glutamate 105 acts as the Proton acceptor in catalysis. A substrate-binding site is contributed by lysine 123.

The protein belongs to the ribose 5-phosphate isomerase family. Homodimer.

It catalyses the reaction aldehydo-D-ribose 5-phosphate = D-ribulose 5-phosphate. The protein operates within carbohydrate degradation; pentose phosphate pathway; D-ribose 5-phosphate from D-ribulose 5-phosphate (non-oxidative stage): step 1/1. Its function is as follows. Catalyzes the reversible conversion of ribose-5-phosphate to ribulose 5-phosphate. This Nitrobacter hamburgensis (strain DSM 10229 / NCIMB 13809 / X14) protein is Ribose-5-phosphate isomerase A.